We begin with the raw amino-acid sequence, 119 residues long: MPRVKRGVTARARHKKVLALAKGYRGRRKNVYRVAKQAVMKAGQYAYRDRRQRKRQFRQLWIARINAAARECGLSYSKFMNGLKKASIEIDRKVLADLAVFEKAVFAQLVEKAKASLAA.

Belongs to the bacterial ribosomal protein bL20 family.

Its function is as follows. Binds directly to 23S ribosomal RNA and is necessary for the in vitro assembly process of the 50S ribosomal subunit. It is not involved in the protein synthesizing functions of that subunit. This Laribacter hongkongensis (strain HLHK9) protein is Large ribosomal subunit protein bL20.